The chain runs to 200 residues: Small ribosomal subunit protein eS8A (200 aa).

2 disordered regions span residues 1 to 40 and 123 to 145; these read MGIT…RIGP and SKGK…KHSA. Residues 135–145 show a composition bias toward basic residues; it reads KSKHVQRKHSA.

This sequence belongs to the eukaryotic ribosomal protein eS8 family. As to quaternary structure, component of the small ribosomal subunit (SSU). Mature yeast ribosomes consist of a small (40S) and a large (60S) subunit. The 40S small subunit contains 1 molecule of ribosomal RNA (18S rRNA) and at least 33 different proteins. The large 60S subunit contains 3 rRNA molecules (25S, 5.8S and 5S rRNA) and at least 46 different proteins.

The protein resides in the cytoplasm. Component of the ribosome, a large ribonucleoprotein complex responsible for the synthesis of proteins in the cell. The small ribosomal subunit (SSU) binds messenger RNAs (mRNAs) and translates the encoded message by selecting cognate aminoacyl-transfer RNA (tRNA) molecules. The large subunit (LSU) contains the ribosomal catalytic site termed the peptidyl transferase center (PTC), which catalyzes the formation of peptide bonds, thereby polymerizing the amino acids delivered by tRNAs into a polypeptide chain. The nascent polypeptides leave the ribosome through a tunnel in the LSU and interact with protein factors that function in enzymatic processing, targeting, and the membrane insertion of nascent chains at the exit of the ribosomal tunnel. This chain is Small ribosomal subunit protein eS8A (rps801), found in Schizosaccharomyces pombe (strain 972 / ATCC 24843) (Fission yeast).